The primary structure comprises 499 residues: Maturase K (499 aa).

This sequence belongs to the intron maturase 2 family. MatK subfamily.

It is found in the plastid. It localises to the chloroplast. Its function is as follows. Usually encoded in the trnK tRNA gene intron. Probably assists in splicing its own and other chloroplast group II introns. The sequence is that of Maturase K from Chamaecrista fasciculata (Showy partridge pea).